Consider the following 348-residue polypeptide: MDLIHTFLNLIAPPFTFFFLLFFLPPFQIFKFFLSILGTLFSEDVAGKVVVITGASSGIGESLAYEYAKRGACLVLAARRERSLQEVAERARDLGSPDVVVVRADVSKAEDCRKVVDQTMNRFGRLDHLVNNAGIMSVSMLEEVEDITGYRETMDINFWGYVYMTRFAAPYLRNSRGRIVVLSSSSSWMPTPRMSFYNASKAAISQFFETLRVEFGPDIGITLVTPGFIESELTQGKFYNAGERVIDQDMRDVQVSTTPILRVESAARSIVRSAIRGERYVTEPAWFRVTYWWKLFCPEVMEWVFRLMYLASPGEPEKETFGKKVLDYTGVKSLLYPETVQVPEPKND.

Residues 10–30 traverse the membrane as a helical; Signal-anchor for type II membrane protein segment; the sequence is LIAPPFTFFFLLFFLPPFQIF. The Proline-knob motif lies at 13-26; that stretch reads PPFTFFFLLFFLPP. NADP(+) is bound by residues 54-80, Asp105, and 132-135; these read GASS…AARR and NAGI. Ser184 provides a ligand contact to substrate. Tyr197 serves as the catalytic Proton acceptor. NADP(+) contacts are provided by residues 197 to 201 and Lys201; that span reads YNASK.

This sequence belongs to the short-chain dehydrogenases/reductases (SDR) family. Expressed in seeds (at protein level). Not expressed in stem, leaf or root (at protein level).

Its subcellular location is the lipid droplet. It is found in the membrane. It carries out the reaction an 11beta-hydroxysteroid + NADP(+) = an 11-oxosteroid + NADPH + H(+). The enzyme catalyses an 11beta-hydroxysteroid + NAD(+) = an 11-oxosteroid + NADH + H(+). It catalyses the reaction corticosterone + NADP(+) = 11-dehydrocorticosterone + NADPH + H(+). The catalysed reaction is corticosterone + NAD(+) = 11-dehydrocorticosterone + NADH + H(+). It carries out the reaction 17beta-estradiol + NADP(+) = estrone + NADPH + H(+). The enzyme catalyses 17beta-estradiol + NAD(+) = estrone + NADH + H(+). Has dehydrogenase activity against corticosterone (11 beta-hydroxysteroid) and estradiol (17 beta-hydroxysteroid), with higher activity against estradiol. Possesses higher dehydrogenase activity with NADP(+) than NAD(+) regardless of the sterol substrate. May be involved in signal transduction regulated by various sterols. In Sesamum indicum (Oriental sesame), this protein is 11-beta-hydroxysteroid dehydrogenase A.